The primary structure comprises 950 residues: Kinase suppressor of Ras 2 (950 aa).

The disordered stretch occupies residues 239 to 296; sequence PPLESGHRSLPPSPRQRHAVRTPPRTPNIVTTVTPPGTPPMRKKNKLKPPGTPPPSSR. The segment covering 259–273 has biased composition (low complexity); that stretch reads RTPPRTPNIVTTVTP. 2 positions are modified to phosphothreonine: T272 and T276. Residues 412 to 456 form a Phorbol-ester/DAG-type zinc finger; sequence KHRFSTKYWMSQTCTVCGKGMLFGLKCKNCKLKCHNKCTKEAPPC. Residues H413, C425, C428, C438, C441, H446, C449, and C456 each contribute to the Zn(2+) site. Phosphoserine; by MARK3 is present on S474. T497 bears the Phosphothreonine mark. The tract at residues 498–556 is disordered; that stretch reads LPKTNKINKDHIPVPYQPDSSSNPSSTTSSTPSSPAPPLPPSATPPSPLHPSPQCTRQQ. Over residues 517-530 the composition is skewed to low complexity; that stretch reads SSSNPSSTTSSTPS. Pro residues predominate over residues 531-548; sequence SPAPPLPPSATPPSPLHP. The region spanning 666–931 is the Protein kinase domain; the sequence is LEIGELIGKG…TKLMDMLEKL (266 aa). 672 to 680 is an ATP binding site; it reads IGKGRFGQV. Catalysis depends on D786, which acts as the Proton donor/acceptor. ATP contacts are provided by K788 and D803.

Belongs to the protein kinase superfamily. TKL Ser/Thr protein kinase family. In terms of assembly, heterodimerizes (via N-terminus) with BRAF (via N-terminus) in a MAP2K1/MEK1-dependent manner. Interacts with BRAF; this increases the low intrinsic protein kinase activity of KSR2. Interacts with MAP2K1, forming a heterodimer that can dimerize to form a heterotetramer. Interacts with MAP3K8, MAPK, RAS and RAF. In terms of processing, phosphorylated on Ser-474 by MARK3. As to expression, mainly expressed in brain and kidney.

It localises to the cytoplasm. The protein localises to the membrane. It catalyses the reaction L-seryl-[protein] + ATP = O-phospho-L-seryl-[protein] + ADP + H(+). It carries out the reaction L-threonyl-[protein] + ATP = O-phospho-L-threonyl-[protein] + ADP + H(+). With respect to regulation, kinase activity is inhibited by ASC24. Location-regulated scaffold connecting MEK to RAF. Has very low protein kinase activity and can phosphorylate MAP2K1 at several Ser and Thr residues with very low efficiency (in vitro). Acts as MAP2K1/MEK1-dependent allosteric activator of BRAF; upon binding to MAP2K1/MEK1, dimerizes with BRAF and promotes BRAF-mediated phosphorylation of MAP2K1/MEK1. Interaction with BRAF enhances KSR2-mediated phosphorylation of MAP2K1 (in vitro). Blocks MAP3K8 kinase activity and MAP3K8-mediated signaling. Acts as a negative regulator of MAP3K3-mediated activation of ERK, JNK and NF-kappa-B pathways, inhibiting MAP3K3-mediated interleukin-8 production. The protein is Kinase suppressor of Ras 2 of Homo sapiens (Human).